Consider the following 140-residue polypeptide: Probable lipoprotein LppE (140 aa).

Positions 1-21 are cleaved as a signal peptide; the sequence is MCNRLVTVTGVAMVVAAGLSA. Residue C22 is the site of N-palmitoyl cysteine attachment. Residue C22 is the site of S-diacylglycerol cysteine attachment.

This sequence belongs to the mycobacterial 19 kDa antigen family.

The protein resides in the cell membrane. This is Probable lipoprotein LppE (lppE) from Mycobacterium tuberculosis (strain ATCC 25618 / H37Rv).